The sequence spans 185 residues: Ribosome-recycling factor (185 aa).

This sequence belongs to the RRF family.

It localises to the cytoplasm. Its function is as follows. Responsible for the release of ribosomes from messenger RNA at the termination of protein biosynthesis. May increase the efficiency of translation by recycling ribosomes from one round of translation to another. This Xylella fastidiosa (strain 9a5c) protein is Ribosome-recycling factor.